A 223-amino-acid polypeptide reads, in one-letter code: Type III pantothenate kinase (223 aa).

ATP is bound at residue 17 to 24 (DIGNTRIH). Substrate is bound by residues tyrosine 81 and 85–88 (GIDR). The Proton acceptor role is filled by aspartate 87. Aspartate 102 contributes to the K(+) binding site. An ATP-binding site is contributed by serine 105. Position 157 (threonine 157) interacts with substrate.

This sequence belongs to the type III pantothenate kinase family. Homodimer. NH4(+) serves as cofactor. Requires K(+) as cofactor.

The protein localises to the cytoplasm. It catalyses the reaction (R)-pantothenate + ATP = (R)-4'-phosphopantothenate + ADP + H(+). The protein operates within cofactor biosynthesis; coenzyme A biosynthesis; CoA from (R)-pantothenate: step 1/5. Functionally, catalyzes the phosphorylation of pantothenate (Pan), the first step in CoA biosynthesis. In Helicobacter pylori (strain J99 / ATCC 700824) (Campylobacter pylori J99), this protein is Type III pantothenate kinase.